The following is an 887-amino-acid chain: MMNRFRKWLYKPKRSDPQLLARFYYADEELNQVAAELDSLDGRKDPQRCTLLVSQFRSCQDNVLNIINQIMDECIPQDRAPRDFCVKFPEEIRHDNLAGQLWFGAECLAAGSIIMNRELESMAMRPLAKELTRSLEDVRGALRDQALRDLNTYTEKMREALRHFDVLFAEFELSYVSAMVPVKSPREYYVQQEVIVLFCETVERALDFGYLTQDMIDDYEPALMFSIPRLAIVCGLVVYADGPLNLDRKVEDMSELFRPFHTLLRKIRDLLQTLTEEELHTLERNLCISQDVEFPIRADVQGPAALAPALSAPLPPEGPLSAKAKDPDAELACSMQYDDQELEQLSRMVHRAGDEMSSLLSPPIACQSPAHRPGAEGSPGGEASPGRPRLRSGSDEEERVFFMDDVEGTAEALARPESPAGPFGWAGSTWADPQEKGQGGPGGAAGISLPASEKEEDLSNNNLEAEGTDGASLAGTSSCSCLDSRLHLDGWEVGADDAETAEMIAHRTGGMKLSATVIFNPKSPTSLDSAVATQEAASEPVAEGMDGGPHKLSTGATNCLLHSCVCCGSCGDSREDVVERLREKCSPGGVIGASYAAGLAKASDRAPERQEEAPPPSEDASNGREPKAPTSDKCLPHTSGSQVDTASGLQGEAGVAGQQEPEARELHAGSPSAHEAPQALSGSSSSTAGSCSSDKMGPEAAPAATHAAPQATREKIRSRFHGSHDLIHRLFVCISGVADQLQTNYASDLRSILKTLFEVMATKPETDDKEKLRKVTQTLRSAALEDCALCQETLSSSELAAKTRDGDFEDPPEWVPDEACGFCTACKAPFTVIRRKHHCRSCGKIFCSRCSSHSAPLPRYGQVKPVRVCTHCYMFHVTPFYSDKAGL.

K87 is covalently cross-linked (Glycyl lysine isopeptide (Lys-Gly) (interchain with G-Cter in ubiquitin)). Residues 308 to 327 form a disordered region; it reads PALSAPLPPEGPLSAKAKDP. S334 bears the Phosphoserine mark. 2 disordered regions span residues 354–396 and 412–474; these read DEMS…GSDE and ALAR…ASLA. T516 is subject to Phosphothreonine. At S586 the chain carries Phosphoserine; by MAP2K. Residues 599–714 form a disordered region; sequence LAKASDRAPE…THAAPQATRE (116 aa). The span at 602 to 612 shows a compositional bias: basic and acidic residues; the sequence is ASDRAPERQEE. The span at 638-648 shows a compositional bias: polar residues; that stretch reads TSGSQVDTASG. 2 stretches are compositionally biased toward low complexity: residues 681–693 and 700–711; these read SGSS…SCSS and AAPAATHAAPQA. Residues 817–879 form an FYVE-type zinc finger; sequence DEACGFCTAC…THCYMFHVTP (63 aa). C823, C826, C839, C842, C847, C850, and C869 together coordinate Zn(2+). T870 carries the post-translational modification Phosphothreonine; by MAP2K. C872 provides a ligand contact to Zn(2+).

Belongs to the lst-2 family. In terms of assembly, interacts with TRIM3. Monoubiquitination at Lys-87 prevents binding to phosphatidylinositol 3-phosphate (PI3P) and localization to early endosome membranes.

Its subcellular location is the cytoplasm. The protein resides in the cytosol. It is found in the early endosome membrane. Its function is as follows. Negative regulator of epidermal growth factor receptor (EGFR) signaling. Acts by promoting EGFR degradation in endosomes when not monoubiquitinated. The chain is Lateral signaling target protein 2 homolog (ZFYVE28) from Homo sapiens (Human).